The sequence spans 228 residues: uncharacterized protein (228 aa).

Positions 179, 199, and 208 each coordinate S-adenosyl-L-methionine.

This sequence belongs to the class IV-like SAM-binding methyltransferase superfamily. RNA methyltransferase TrmH family.

This is an uncharacterized protein from Borreliella burgdorferi (strain ATCC 35210 / DSM 4680 / CIP 102532 / B31) (Borrelia burgdorferi).